We begin with the raw amino-acid sequence, 74 residues long: uncharacterized protein (74 aa).

A helical transmembrane segment spans residues 20–40 (IYSYTLLTLLVITLICYLIHI).

This sequence belongs to the asfivirus KP93L family.

It localises to the host membrane. This is an uncharacterized protein from African swine fever virus (isolate Tick/South Africa/Pretoriuskop Pr4/1996) (ASFV).